Reading from the N-terminus, the 228-residue chain is 7-cyano-7-deazaguanine synthase (228 aa).

9-19 serves as a coordination point for ATP; sequence LSGGPDSTTVL. C193, C203, C206, and C209 together coordinate Zn(2+).

It belongs to the QueC family. It depends on Zn(2+) as a cofactor.

It carries out the reaction 7-carboxy-7-deazaguanine + NH4(+) + ATP = 7-cyano-7-deazaguanine + ADP + phosphate + H2O + H(+). It participates in purine metabolism; 7-cyano-7-deazaguanine biosynthesis. Functionally, catalyzes the ATP-dependent conversion of 7-carboxy-7-deazaguanine (CDG) to 7-cyano-7-deazaguanine (preQ(0)). This chain is 7-cyano-7-deazaguanine synthase, found in Rickettsia massiliae (strain Mtu5).